Here is a 595-residue protein sequence, read N- to C-terminus: MFS-type efflux pump MFS2 (595 aa).

N-linked (GlcNAc...) asparagine glycosylation is present at asparagine 62. 12 helical membrane-spanning segments follow: residues 69–89, 106–126, 136–156, 166–186, 197–217, 225–245, 301–321, 336–356, 381–401, 409–429, 442–462, and 478–498; these read WSITFVVAIATLAVALISSAY, VITLGVSLFVLGFAIGPLIWA, LLFFGTYLALTAFNAGAAGSP, FFAGSFGSSPLTNAGGVIADM, GIFAIAPFLGPVLGPVIGGFL, WVEGFLAIFSGVVWIIGSIFL, PIVLLLSTYMAIVYGTLYMLF, PGIGGLAFLGVLGGILAAMVI, LPVAIIGGIAIPIGLFWFAWT, IVSIIASAPFGFGMVLVFLSL, ASVLAANSVLRSLFGAAFPLF, and IPAFLALACVPFPFLFYIYGA.

Belongs to the major facilitator superfamily. DHA1 family. Polyamines/proton antiporter (TC 2.A.1.2.16) subfamily.

Its subcellular location is the cell membrane. Its function is as follows. MFS-type efflux pump involved in the modulation susceptibility to fluconazole and voriconazole, 2 azoles with similar molecular structure. This chain is MFS-type efflux pump MFS2, found in Trichophyton rubrum (strain ATCC MYA-4607 / CBS 118892) (Athlete's foot fungus).